The sequence spans 308 residues: 34.2 kDa protein in rubredoxin operon (308 aa).

The cysteines at positions 136 and 139 are disulfide-linked. 268–278 (TNIKGVFAAGD) contacts FAD.

It belongs to the class-II pyridine nucleotide-disulfide oxidoreductase family.

This chain is 34.2 kDa protein in rubredoxin operon, found in Clostridium pasteurianum.